The following is a 543-amino-acid chain: Hydroxylamine reductase (543 aa).

The [4Fe-4S] cluster site is built by Cys-5, Cys-8, Cys-17, and Cys-23. The hybrid [4Fe-2O-2S] cluster site is built by His-236, Glu-260, Cys-304, Cys-398, Cys-426, Cys-451, Glu-486, and Lys-488. At Cys-398 the chain carries Cysteine persulfide.

This sequence belongs to the HCP family. [4Fe-4S] cluster is required as a cofactor. Hybrid [4Fe-2O-2S] cluster serves as cofactor.

The protein localises to the cytoplasm. It catalyses the reaction A + NH4(+) + H2O = hydroxylamine + AH2 + H(+). Its function is as follows. Catalyzes the reduction of hydroxylamine to form NH(3) and H(2)O. The polypeptide is Hydroxylamine reductase (Bacteroides fragilis (strain YCH46)).